A 266-amino-acid chain; its full sequence is Glucosamine-6-phosphate deaminase (266 aa).

Asp-72 (proton acceptor; for enolization step) is an active-site residue. Asp-141 serves as the catalytic For ring-opening step. The active-site Proton acceptor; for ring-opening step is His-143. Glu-148 (for ring-opening step) is an active-site residue.

Belongs to the glucosamine/galactosamine-6-phosphate isomerase family. NagB subfamily. Homohexamer.

The enzyme catalyses alpha-D-glucosamine 6-phosphate + H2O = beta-D-fructose 6-phosphate + NH4(+). It functions in the pathway amino-sugar metabolism; N-acetylneuraminate degradation; D-fructose 6-phosphate from N-acetylneuraminate: step 5/5. Its activity is regulated as follows. Allosterically activated by N-acetylglucosamine 6-phosphate (GlcNAc6P). In terms of biological role, catalyzes the reversible isomerization-deamination of glucosamine 6-phosphate (GlcN6P) to form fructose 6-phosphate (Fru6P) and ammonium ion. The polypeptide is Glucosamine-6-phosphate deaminase (Serratia proteamaculans (strain 568)).